A 57-amino-acid polypeptide reads, in one-letter code: uncharacterized protein (57 aa).

The helical transmembrane segment at 34–54 (AALLDAAALVVIPGLLTAAAV) threads the bilayer.

The protein localises to the membrane. This is an uncharacterized protein from Dictyostelium discoideum (Social amoeba).